Consider the following 483-residue polypeptide: Salicylaldehyde dehydrogenase (483 aa).

228–233 is a binding site for NAD(+); it reads GSTRVG. Catalysis depends on residues Glu-250 and Cys-284.

The protein belongs to the aldehyde dehydrogenase family.

The catalysed reaction is salicylaldehyde + NAD(+) + H2O = salicylate + NADH + 2 H(+). It participates in aromatic compound metabolism; naphthalene degradation. The sequence is that of Salicylaldehyde dehydrogenase (nahF) from Pseudomonas putida (Arthrobacter siderocapsulatus).